The sequence spans 337 residues: Lipopolysaccharide 1,3-galactosyltransferase (337 aa).

UDP-binding positions include 33–38 (GIDKNF) and 130–131 (DA). Mg(2+) contacts are provided by aspartate 130 and aspartate 132. 2 short sequence motifs (DXD) span residues 130-132 (DAD) and 219-221 (DQD). Histidine 264 is a Mg(2+) binding site. A UDP-binding site is contributed by 264–270 (HYIGPTK).

This sequence belongs to the glycosyltransferase 8 family. It depends on Mg(2+) as a cofactor.

The catalysed reaction is UDP-alpha-D-galactose + [lipopolysaccharide] = UDP + 3-alpha-D-galactosyl-[lipopolysaccharide].. The protein operates within bacterial outer membrane biogenesis; LPS core biosynthesis. Its activity is regulated as follows. Inhibited in a competitive manner by closely related nonsubstrate lipopolysaccharides. Galactosyltransferase involved in the biosynthesis of the core oligosaccharide region of lipopolysaccharide (LPS). Catalyzes the addition of an alpha l,3-linked galactose (galactose I) to the first outer-core glucose (glucose I). Cannot use UDP-glucose. Activity probably does not require the branched galactose added by WaaB, but it is higher in the presence of this branched galactose. The sequence is that of Lipopolysaccharide 1,3-galactosyltransferase from Salmonella typhimurium (strain LT2 / SGSC1412 / ATCC 700720).